Reading from the N-terminus, the 278-residue chain is Dermonecrotic toxin LbSicTox-betaIA1a (278 aa).

The active site involves H12. 2 residues coordinate Mg(2+): E32 and D34. H48 serves as the catalytic Nucleophile. 2 disulfides stabilise this stretch: C52–C58 and C54–C197. D92 contacts Mg(2+). N-linked (GlcNAc...) asparagine glycosylation is present at N258.

This sequence belongs to the arthropod phospholipase D family. Class II subfamily. Class IIb sub-subfamily. Expressed by the venom gland.

It localises to the secreted. It carries out the reaction an N-(acyl)-sphingosylphosphoethanolamine = an N-(acyl)-sphingosyl-1,3-cyclic phosphate + ethanolamine. The catalysed reaction is a 1-acyl-sn-glycero-3-phosphocholine = a 1-acyl-sn-glycero-2,3-cyclic phosphate + choline. The enzyme catalyses a 1-acyl-sn-glycero-3-phosphoethanolamine = a 1-acyl-sn-glycero-2,3-cyclic phosphate + ethanolamine. In terms of biological role, this toxin does not show activity on sphingomyelin (SM) and does not show dermonecrotic activities. This toxin is a member of dermonecrotic toxins that cleave the phosphodiester linkage between the phosphate and headgroup of certain phospholipids (sphingolipid and lysolipid substrates), forming an alcohol (often choline) and a cyclic phosphate. It may act on ceramide phosphoethanolamine (CPE), lysophosphatidylcholine (LPC) and lysophosphatidylethanolamine (LPE), but not on lysophosphatidylserine (LPS), and lysophosphatidylglycerol (LPG). It may act by transphosphatidylation, releasing exclusively cyclic phosphate products as second products. The sequence is that of Dermonecrotic toxin LbSicTox-betaIA1a from Loxosceles boneti (North American fiddleback spider).